The chain runs to 189 residues: Elongation factor P 2 (189 aa).

The protein belongs to the elongation factor P family.

Its subcellular location is the cytoplasm. It functions in the pathway protein biosynthesis; polypeptide chain elongation. Involved in peptide bond synthesis. Stimulates efficient translation and peptide-bond synthesis on native or reconstituted 70S ribosomes in vitro. Probably functions indirectly by altering the affinity of the ribosome for aminoacyl-tRNA, thus increasing their reactivity as acceptors for peptidyl transferase. The protein is Elongation factor P 2 of Lactobacillus acidophilus (strain ATCC 700396 / NCK56 / N2 / NCFM).